A 722-amino-acid polypeptide reads, in one-letter code: Glycine--tRNA ligase beta subunit (722 aa).

Belongs to the class-II aminoacyl-tRNA synthetase family. In terms of assembly, tetramer of two alpha and two beta subunits.

The protein localises to the cytoplasm. The catalysed reaction is tRNA(Gly) + glycine + ATP = glycyl-tRNA(Gly) + AMP + diphosphate. The polypeptide is Glycine--tRNA ligase beta subunit (Xylella fastidiosa (strain M12)).